A 185-amino-acid chain; its full sequence is Ribosome-recycling factor (185 aa).

Belongs to the RRF family.

It is found in the cytoplasm. Its function is as follows. Responsible for the release of ribosomes from messenger RNA at the termination of protein biosynthesis. May increase the efficiency of translation by recycling ribosomes from one round of translation to another. This is Ribosome-recycling factor from Listeria welshimeri serovar 6b (strain ATCC 35897 / DSM 20650 / CCUG 15529 / CIP 8149 / NCTC 11857 / SLCC 5334 / V8).